Here is a 557-residue protein sequence, read N- to C-terminus: Putative sensory transducer protein (557 aa).

A helical membrane pass occupies residues T122–I145. An HAMP domain is found at R147–Y199. The 230-residue stretch at V243–S472 folds into the Methyl-accepting transducer domain. Q268 is subject to Glutamate methyl ester (Gln). The residue at position 274 (E274) is a Glutamate methyl ester (Glu). Position 281 is a glutamate methyl ester (Gln) (Q281). E463 bears the Glutamate methyl ester (Glu) mark. A compositionally biased stretch (basic and acidic residues) spans D511–G541. Positions D511–G542 are disordered.

It belongs to the methyl-accepting chemotaxis (MCP) protein family.

It localises to the cell membrane. Functionally, may bind attractants or detect changes in the extracellular concentration of soluble sugars. The sequence is that of Putative sensory transducer protein from Acetivibrio thermocellus (strain ATCC 27405 / DSM 1237 / JCM 9322 / NBRC 103400 / NCIMB 10682 / NRRL B-4536 / VPI 7372) (Clostridium thermocellum).